We begin with the raw amino-acid sequence, 153 residues long: Pheromone-binding protein Gp-9 (153 aa).

A signal peptide spans 1-19; the sequence is MKTFVLHIFIFAFVAFASA. 3 disulfide bridges follow: Cys37–Cys77, Cys73–Cys129, and Cys118–Cys138.

This sequence belongs to the PBP/GOBP family. As to quaternary structure, homodimer.

The protein resides in the secreted. Its function is as follows. Colony queen number, a major feature of social organization, is associated with worker genotype for Gp-9. Colonies are headed by either a single reproductive queen (monogyne form) or multiple queens (polygyne form). Differences in worker Gp-9 genotypes between social forms may cause differences in workers' abilities to recognize queens and regulate their numbers. The polypeptide is Pheromone-binding protein Gp-9 (Solenopsis amblychila (Desert fire ant)).